A 359-amino-acid chain; its full sequence is Hereditary hemochromatosis protein homolog (359 aa).

A signal peptide spans 1-24; that stretch reads MSLSAGLPVRPLLLLLLLLWSVAP. Residues 25 to 126 are alpha-1; it reads QALPPRSHSL…KVTKLGVVSE (102 aa). Topologically, residues 25 to 318 are extracellular; sequence QALPPRSHSL…WEPLQSQAMI (294 aa). N-linked (GlcNAc...) asparagine glycosylation is found at N114, N142, N166, and N246. An alpha-2 region spans residues 127–217; sequence SHILQVVLGC…ELGRGVLGQQ (91 aa). 2 cysteine pairs are disulfide-bonded: C136/C199 and C237/C294. The tract at residues 218–309 is alpha-3; that stretch reads VPTLVKVTRH…GLDQPLTASW (92 aa). One can recognise an Ig-like C1-type domain in the interval 219-308; the sequence is PTLVKVTRHW…PGLDQPLTAS (90 aa). The tract at residues 310 to 318 is connecting peptide; that stretch reads EPLQSQAMI. The helical transmembrane segment at 319–339 threads the bilayer; it reads IGIISGVTVCAIFLVGILFLI. Over 340–359 the chain is Cytoplasmic; the sequence is LRKRKASGGTMGGYVLTDCE.

Belongs to the MHC class I family. In terms of assembly, binds TFR through the extracellular domain in a pH-dependent manner.

It is found in the cell membrane. Functionally, binds to transferrin receptor (TFR) and reduces its affinity for iron-loaded transferrin. The polypeptide is Hereditary hemochromatosis protein homolog (Hfe) (Mus musculus (Mouse)).